Consider the following 220-residue polypeptide: Ribosomal RNA large subunit methyltransferase E (220 aa).

The S-adenosyl-L-methionine site is built by glycine 60, tryptophan 62, aspartate 92, aspartate 108, and aspartate 133. Lysine 173 acts as the Proton acceptor in catalysis. Residues 198 to 220 (KPKASRDKSSETFILGRQLKHPR) are disordered.

It belongs to the class I-like SAM-binding methyltransferase superfamily. RNA methyltransferase RlmE family.

Its subcellular location is the cytoplasm. It carries out the reaction uridine(2552) in 23S rRNA + S-adenosyl-L-methionine = 2'-O-methyluridine(2552) in 23S rRNA + S-adenosyl-L-homocysteine + H(+). Its function is as follows. Specifically methylates the uridine in position 2552 of 23S rRNA at the 2'-O position of the ribose in the fully assembled 50S ribosomal subunit. This chain is Ribosomal RNA large subunit methyltransferase E, found in Burkholderia cenocepacia (strain HI2424).